The chain runs to 493 residues: Cell division protein FtsA (493 aa).

Residues 434-468 (AHQSNPTPHIHSSPTERNLSDLKTPSAPLNTAKND) are disordered. Residues 436 to 465 (QSNPTPHIHSSPTERNLSDLKTPSAPLNTA) show a composition bias toward polar residues.

This sequence belongs to the FtsA/MreB family. Self-interacts. Interacts with FtsZ.

The protein localises to the cell inner membrane. Its function is as follows. Cell division protein that is involved in the assembly of the Z ring. May serve as a membrane anchor for the Z ring. The protein is Cell division protein FtsA of Helicobacter pylori (strain J99 / ATCC 700824) (Campylobacter pylori J99).